A 298-amino-acid polypeptide reads, in one-letter code: Inosose dehydratase (298 aa).

It belongs to the IolE/MocC family. Requires glutathione as cofactor. The cofactor is Co(2+). Mn(2+) is required as a cofactor.

The catalysed reaction is scyllo-inosose = 3D-3,5/4-trihydroxycyclohexane-1,2-dione + H2O. Its pathway is polyol metabolism; myo-inositol degradation into acetyl-CoA; acetyl-CoA from myo-inositol: step 2/7. Its function is as follows. Catalyzes the dehydration of inosose (2-keto-myo-inositol, 2KMI or 2,4,6/3,5-pentahydroxycyclohexanone) to 3D-(3,5/4)-trihydroxycyclohexane-1,2-dione (D-2,3-diketo-4-deoxy-epi-inositol). The protein is Inosose dehydratase of Bacillus cereus (strain AH820).